A 406-amino-acid polypeptide reads, in one-letter code: Tryptophan 2,3-dioxygenase (406 aa).

Residues 72–76 (FIVTH) and Arg144 contribute to the substrate site. Residue His328 participates in heme binding. Residue Thr342 participates in substrate binding.

Belongs to the tryptophan 2,3-dioxygenase family. Homotetramer. Dimer of dimers. Requires heme as cofactor.

The catalysed reaction is L-tryptophan + O2 = N-formyl-L-kynurenine. It participates in amino-acid degradation; L-tryptophan degradation via kynurenine pathway; L-kynurenine from L-tryptophan: step 1/2. Its function is as follows. Heme-dependent dioxygenase that catalyzes the oxidative cleavage of the L-tryptophan (L-Trp) pyrrole ring and converts L-tryptophan to N-formyl-L-kynurenine. Catalyzes the oxidative cleavage of the indole moiety. The protein is Tryptophan 2,3-dioxygenase of Xenopus tropicalis (Western clawed frog).